The chain runs to 256 residues: Protein TV0584 (256 aa).

The protein belongs to the CinA family.

This Thermoplasma volcanium (strain ATCC 51530 / DSM 4299 / JCM 9571 / NBRC 15438 / GSS1) protein is Protein TV0584.